We begin with the raw amino-acid sequence, 335 residues long: Flagellar P-ring protein (335 aa).

The signal sequence occupies residues Met1 to Ala24.

The protein belongs to the FlgI family. In terms of assembly, the basal body constitutes a major portion of the flagellar organelle and consists of four rings (L,P,S, and M) mounted on a central rod.

The protein resides in the periplasm. It localises to the bacterial flagellum basal body. In terms of biological role, assembles around the rod to form the L-ring and probably protects the motor/basal body from shearing forces during rotation. This is Flagellar P-ring protein from Bdellovibrio bacteriovorus (strain ATCC 15356 / DSM 50701 / NCIMB 9529 / HD100).